Reading from the N-terminus, the 170-residue chain is 4-hydroxyphenylacetate 3-monooxygenase reductase component (170 aa).

This sequence belongs to the non-flavoprotein flavin reductase family. HpaC subfamily. In terms of assembly, monomer. HPA 3-hydroxylase consists of a reductase component HpaC and an oxygenase component HpaB. Some form of interactions between the reductase and the oxygenase facilitate the transfer of FADH(-) to the oxygenase in P.aeruginosa, although interactions are not required in other species.

The enzyme catalyses FADH2 + NAD(+) = FAD + NADH + 2 H(+). It functions in the pathway aromatic compound metabolism; 4-hydroxyphenylacetate degradation; pyruvate and succinate semialdehyde from 4-hydroxyphenylacetate: step 1/7. Its activity is regulated as follows. The rate of FAD reduction is independent of the presence of HPA, demonstrating that, in contrast to HPAH from A.baumannii, the activity of the HPAH reductase is not allosterically regulated by the substrate. In terms of biological role, reductase component of the 4-hydroxyphenylacetate (HPA) 3-hydroxylase. Catalyzes the reduction of FAD by NADH. The reduced flavin is then transferred to the oxygenase component HpaB. Is also able to reduce FMN and riboflavin, but preferentially binds FAD. Has no activity with NADPH as the reductant. In Pseudomonas aeruginosa (strain ATCC 15692 / DSM 22644 / CIP 104116 / JCM 14847 / LMG 12228 / 1C / PRS 101 / PAO1), this protein is 4-hydroxyphenylacetate 3-monooxygenase reductase component.